We begin with the raw amino-acid sequence, 101 residues long: Putative antitoxin HigA2 (101 aa).

One can recognise an HTH cro/C1-type domain in the interval 35–90; it reads LRELRAAQSLTQVQVAALAHIRQSRVSSIENGDIGSAQVNTLRKYVSALGGELDIT. A DNA-binding region (H-T-H motif) is located at residues 46–65; it reads QVQVAALAHIRQSRVSSIEN.

Functionally, putative antitoxin component of a type II toxin-antitoxin (TA) system. Its cognate toxin would be HigB2. The protein is Putative antitoxin HigA2 of Mycobacterium tuberculosis (strain ATCC 25618 / H37Rv).